The chain runs to 246 residues: Zorya protein ZorB (246 aa).

A helical transmembrane segment spans residues 20–40; the sequence is FWISYADLMTAMMVLFLVVMV. Residues 86 to 218 form the OmpA-like domain; the sequence is CHDNRISFGE…RVELRMQFFG (133 aa).

This sequence belongs to the MotB family.

The protein localises to the cell inner membrane. Functionally, component of antiviral defense system Zorya type I, composed of ZorA, ZorB, ZorC and ZorD. Expression of Zorya type I in E.coli (strain MG1655) confers 10,000-fold resistance to phage SECphi27, 100-fold resistance to lambda, and 10-fold resistance to T7. While most T7 infected Zorya-containing cells undergo abortive infection, a minority produce viable phage progeny. These eventually accumulate to a high multiplicity of infection, leading to culture collapse by 2 hours after initial infection. ZorA and ZorB probably assemble in the cell inner membrane and exert their effect there. The protein is Zorya protein ZorB of Escherichia coli O139:H28 (strain E24377A / ETEC).